The chain runs to 268 residues: MEMO1 family protein Ta0237 (268 aa).

It belongs to the MEMO1 family.

This Thermoplasma acidophilum (strain ATCC 25905 / DSM 1728 / JCM 9062 / NBRC 15155 / AMRC-C165) protein is MEMO1 family protein Ta0237.